The sequence spans 193 residues: Holliday junction branch migration complex subunit RuvA (193 aa).

The interval 1-64 (MIGRIAGILL…EDANLLYGFL (64 aa)) is domain I. Residues 65–139 (TPQERTTFRE…GKLGADLGEL (75 aa)) form a domain II region. The segment at 139–143 (LAGAA) is flexible linker. Residues 144–193 (SPSDHATDILNALLALGYSEKEGLAAIKNVPAGTGVSEGIKLALKALSKV) form a domain III region.

This sequence belongs to the RuvA family. In terms of assembly, homotetramer. Forms an RuvA(8)-RuvB(12)-Holliday junction (HJ) complex. HJ DNA is sandwiched between 2 RuvA tetramers; dsDNA enters through RuvA and exits via RuvB. An RuvB hexamer assembles on each DNA strand where it exits the tetramer. Each RuvB hexamer is contacted by two RuvA subunits (via domain III) on 2 adjacent RuvB subunits; this complex drives branch migration. In the full resolvosome a probable DNA-RuvA(4)-RuvB(12)-RuvC(2) complex forms which resolves the HJ.

Its subcellular location is the cytoplasm. Its function is as follows. The RuvA-RuvB-RuvC complex processes Holliday junction (HJ) DNA during genetic recombination and DNA repair, while the RuvA-RuvB complex plays an important role in the rescue of blocked DNA replication forks via replication fork reversal (RFR). RuvA specifically binds to HJ cruciform DNA, conferring on it an open structure. The RuvB hexamer acts as an ATP-dependent pump, pulling dsDNA into and through the RuvAB complex. HJ branch migration allows RuvC to scan DNA until it finds its consensus sequence, where it cleaves and resolves the cruciform DNA. In Burkholderia lata (strain ATCC 17760 / DSM 23089 / LMG 22485 / NCIMB 9086 / R18194 / 383), this protein is Holliday junction branch migration complex subunit RuvA.